The following is a 794-amino-acid chain: Phenylalanine--tRNA ligase beta subunit (794 aa).

The tRNA-binding domain maps to 40-158 (NSLNSELILG…LKKYIGSDVK (119 aa)). Positions 402-477 (KNKQSLEIKL…RLYSYDKIDE (76 aa)) constitute a B5 domain. 4 residues coordinate Mg(2+): Asp455, Asp461, Glu464, and Glu465. Residues 702–794 (SKFQSSSRDL…NIKQMKVVIR (93 aa)) enclose the FDX-ACB domain.

Belongs to the phenylalanyl-tRNA synthetase beta subunit family. Type 1 subfamily. As to quaternary structure, tetramer of two alpha and two beta subunits. Mg(2+) is required as a cofactor.

It is found in the cytoplasm. It catalyses the reaction tRNA(Phe) + L-phenylalanine + ATP = L-phenylalanyl-tRNA(Phe) + AMP + diphosphate + H(+). This Mycoplasma mycoides subsp. mycoides SC (strain CCUG 32753 / NCTC 10114 / PG1) protein is Phenylalanine--tRNA ligase beta subunit.